Reading from the N-terminus, the 125-residue chain is Small ribosomal subunit protein eS8 (125 aa).

It belongs to the eukaryotic ribosomal protein eS8 family. Part of the 30S ribosomal subunit.

The sequence is that of Small ribosomal subunit protein eS8 from Methanosarcina barkeri (strain Fusaro / DSM 804).